A 386-amino-acid chain; its full sequence is Glyceraldehyde-3-phosphate dehydrogenase, chloroplastic (386 aa).

Residues 1-45 (MAYFKAVAYLAALASAAAFNPGSSFVPRLNAPATQPKAAKMTGPT) constitute a chloroplast transit peptide. NADP(+)-binding positions include 58-59 (RI) and R125. Residues 197–199 (SCT), T228, 257–258 (TG), and R280 contribute to the D-glyceraldehyde 3-phosphate site. The Nucleophile role is filled by C198. N362 serves as a coordination point for NADP(+).

It belongs to the glyceraldehyde-3-phosphate dehydrogenase family. Homotetramer.

Its subcellular location is the plastid. The protein resides in the chloroplast. The enzyme catalyses D-glyceraldehyde 3-phosphate + phosphate + NADP(+) = (2R)-3-phospho-glyceroyl phosphate + NADPH + H(+). The catalysed reaction is D-glyceraldehyde 3-phosphate + phosphate + NAD(+) = (2R)-3-phospho-glyceroyl phosphate + NADH + H(+). The protein operates within carbohydrate biosynthesis; Calvin cycle. In Guillardia theta (Cryptophyte), this protein is Glyceraldehyde-3-phosphate dehydrogenase, chloroplastic (GAPC1).